We begin with the raw amino-acid sequence, 120 residues long: Peptidyl-tRNA hydrolase (120 aa).

Belongs to the PTH2 family.

The protein resides in the cytoplasm. The catalysed reaction is an N-acyl-L-alpha-aminoacyl-tRNA + H2O = an N-acyl-L-amino acid + a tRNA + H(+). Functionally, the natural substrate for this enzyme may be peptidyl-tRNAs which drop off the ribosome during protein synthesis. The polypeptide is Peptidyl-tRNA hydrolase (Saccharolobus islandicus (strain Y.N.15.51 / Yellowstone #2) (Sulfolobus islandicus)).